A 208-amino-acid polypeptide reads, in one-letter code: MTRRAAVKAPRAGAAARRGSVARRTKETDVAVDLRLEPGEASISTGLPFFDHMLDQISRHGGMALTVRAEGDLQVDAHHTVEDVGIGLGEALRQALEDKAGLARYGHAVVPLDEALVEAVVDLSGRPHLTFNAKLPSGKKFIGGYDVDLTQDFLQALVNHARICVHVNVRYGRNLHHVVEAIFKATARALRAATAREGTALPSTKGTL.

The segment at 1 to 22 (MTRRAAVKAPRAGAAARRGSVA) is disordered. Low complexity predominate over residues 7–19 (VKAPRAGAAARRG).

Belongs to the imidazoleglycerol-phosphate dehydratase family.

The protein localises to the cytoplasm. The enzyme catalyses D-erythro-1-(imidazol-4-yl)glycerol 3-phosphate = 3-(imidazol-4-yl)-2-oxopropyl phosphate + H2O. The protein operates within amino-acid biosynthesis; L-histidine biosynthesis; L-histidine from 5-phospho-alpha-D-ribose 1-diphosphate: step 6/9. The polypeptide is Imidazoleglycerol-phosphate dehydratase (Anaeromyxobacter dehalogenans (strain 2CP-C)).